Reading from the N-terminus, the 122-residue chain is Toxin CSTX-1 (122 aa).

Positions 1-20 (MKVLIISAVLFITIFSNISA) are cleaved as a signal peptide. The propeptide occupies 21 to 47 (EIEDDFLEDESFEAEDIIPFFENEQAR). 4 disulfides stabilise this stretch: C49-C64, C56-C73, C63-C91, and C75-C89. Residues 99-112 (AIETGLNIFRGLFK) are predicted alpha-helix. At R108 the chain carries Arginine amide; in CSTX-2a. K121 bears the Lysine amide; in omega-ctenitoxin-Cs1a mark.

The protein belongs to the neurotoxin 19 (CSTX) family. 04 (U1-Lctx) subfamily. As to quaternary structure, monomer. Interacts with CSTX-13 (AC P83919) (Kd=430 nM), but does not interact with CSTX-9 (AC P58604). In terms of tissue distribution, expressed by the venom gland.

The protein localises to the secreted. It is found in the target cell membrane. Functionally, spider venom toxin that shows calcium channel blocking activity and exhibits cytolytic activity by affecting the outer leaflet curvature and/or pore formation across the membrane. It blocks L-type calcium channels (Cav1/CACNA1) in mammalian neurons at nanomolar concentrations. Furthermore, it produces a slow voltage-independent block of mid/low and high voltage-activated calcium channels in cockroach neurons. Potassium ions, histamine, M-ctenitoxin-Cs1a (AC P83619), CSTX-9 (AC P58604), and CSTX-13 (AC P83919) synergistically increase the insecticidal activity of this toxin. In vivo, it causes paralysis in blow flies and provokes death in drosophila. In terms of biological role, blocks voltage-activated calcium channels (Cav). Does not induce cell membrane permeability increase when tested on Xenopus oocytes. No alpha-helical structures are detectable. Is 7-fold less neurotoxic than omega-ctenitoxin-Cs1a on drosophila flies. Its function is as follows. Blocks voltage-activated calcium channels (Cav). Is 190-fold less neurotoxic than omega-ctenitoxin-Cs1a on drosophila flies. In Cupiennius salei (American wandering spider), this protein is Toxin CSTX-1.